The primary structure comprises 247 residues: MASPLTRFLSLNLLLLGESIILGSGEAKPQAPELRIFPKKMDAELGQKVDLVCEVLGSVSQGCSWLFQNSSSKLPQPTFVVYMASSHNKITWDEKLNSSKLFSAMRDTNNKYVLTLNKFSKENEGYYFCSVISNSVMYFSSVVPVLQKVNSTTTKPVLRTPSPVHPTGTSQPQRPEDCRPRGSVKGTGLDFACDIYIWAPLAGICVALLLSLIITLICYHRSRKRVCKCPRPLVRQEGKPRPSEKIV.

An N-terminal signal peptide occupies residues methionine 1–alanine 27. One can recognise an Ig-like V-type domain in the interval lysine 28 to phenylalanine 139. Over lysine 28–tyrosine 196 the chain is Extracellular. Cysteines 53 and 129 form a disulfide. Residues asparagine 69, asparagine 97, and asparagine 150 are each glycosylated (N-linked (GlcNAc...) asparagine). A disordered region spans residues proline 156–glycine 182. A helical membrane pass occupies residues isoleucine 197–isoleucine 217. The Cytoplasmic portion of the chain corresponds to cysteine 218–valine 247.

As to quaternary structure, forms disulfide-linked heterodimers with CD8B at the cell surface. Also forms homodimers in several cell types including NK-cells or peripheral blood T-lymphocytes. Interacts with the MHC class I HLA-A/B2M dimer. Interacts with LCK in a zinc-dependent manner. Palmitoylated, but association with CD8B seems to be more important for the enrichment of CdD8A in lipid rafts. Post-translationally, phosphorylated in cytotoxic T-lymphocytes (CTLs) following activation.

The protein resides in the cell membrane. Functionally, integral membrane glycoprotein that plays an essential role in the immune response and serves multiple functions in responses against both external and internal offenses. In T-cells, functions primarily as a coreceptor for MHC class I molecule:peptide complex. The antigens presented by class I peptides are derived from cytosolic proteins while class II derived from extracellular proteins. Interacts simultaneously with the T-cell receptor (TCR) and the MHC class I proteins presented by antigen presenting cells (APCs). In turn, recruits the Src kinase LCK to the vicinity of the TCR-CD3 complex. LCK then initiates different intracellular signaling pathways by phosphorylating various substrates ultimately leading to lymphokine production, motility, adhesion and activation of cytotoxic T-lymphocytes (CTLs). This mechanism enables CTLs to recognize and eliminate infected cells and tumor cells. In NK-cells, the presence of CD8A homodimers at the cell surface provides a survival mechanism allowing conjugation and lysis of multiple target cells. CD8A homodimer molecules also promote the survival and differentiation of activated lymphocytes into memory CD8 T-cells. This chain is T-cell surface glycoprotein CD8 alpha chain (Cd8a), found in Mus musculus (Mouse).